Here is an 81-residue protein sequence, read N- to C-terminus: Small ribosomal subunit protein bS18A (81 aa).

It belongs to the bacterial ribosomal protein bS18 family. In terms of assembly, part of the 30S ribosomal subunit. Forms a tight heterodimer with protein bS6.

Binds as a heterodimer with protein bS6 to the central domain of the 16S rRNA, where it helps stabilize the platform of the 30S subunit. This chain is Small ribosomal subunit protein bS18A, found in Saccharopolyspora erythraea (strain ATCC 11635 / DSM 40517 / JCM 4748 / NBRC 13426 / NCIMB 8594 / NRRL 2338).